The chain runs to 295 residues: Acetylglutamate kinase (295 aa).

Substrate-binding positions include 70-71 (GG), Arg-92, and Asn-191.

Belongs to the acetylglutamate kinase family. ArgB subfamily.

It localises to the cytoplasm. It carries out the reaction N-acetyl-L-glutamate + ATP = N-acetyl-L-glutamyl 5-phosphate + ADP. The protein operates within amino-acid biosynthesis; L-arginine biosynthesis; N(2)-acetyl-L-ornithine from L-glutamate: step 2/4. Functionally, catalyzes the ATP-dependent phosphorylation of N-acetyl-L-glutamate. The polypeptide is Acetylglutamate kinase (Mycobacterium avium (strain 104)).